We begin with the raw amino-acid sequence, 114 residues long: uncharacterized protein (114 aa).

A disordered region spans residues 1 to 37 (MLKKILSLFKKEEPKTEEKPTEVEEKKEEREEKEEKK). Positions 9 to 37 (FKKEEPKTEEKPTEVEEKKEEREEKEEKK) are enriched in basic and acidic residues.

This is an uncharacterized protein from Aquifex aeolicus (strain VF5).